The primary structure comprises 365 residues: Alanine racemase (365 aa).

K32 functions as the Proton acceptor; specific for D-alanine in the catalytic mechanism. Residue K32 is modified to N6-(pyridoxal phosphate)lysine. Residue R128 participates in substrate binding. Catalysis depends on Y257, which acts as the Proton acceptor; specific for L-alanine. Residue M305 coordinates substrate.

Belongs to the alanine racemase family. Requires pyridoxal 5'-phosphate as cofactor.

The catalysed reaction is L-alanine = D-alanine. The protein operates within amino-acid biosynthesis; D-alanine biosynthesis; D-alanine from L-alanine: step 1/1. Its function is as follows. Catalyzes the interconversion of L-alanine and D-alanine. May also act on other amino acids. The polypeptide is Alanine racemase (alr) (Francisella tularensis subsp. tularensis (strain WY96-3418)).